Reading from the N-terminus, the 265-residue chain is 2-amino-3,7-dideoxy-D-threo-hept-6-ulosonate synthase (265 aa).

The active-site Proton acceptor is aspartate 25. Residues 25-29 (DHGIT) and 144-146 (YAR) each bind 1-deoxy-D-threo-hexo-2,5-diulose 6-phosphate. Tyrosine 144 serves as the catalytic Proton donor. The active-site Schiff-base intermediate with substrate is lysine 174. Residues 199-200 (GG) and 226-227 (GR) each bind 1-deoxy-D-threo-hexo-2,5-diulose 6-phosphate.

Belongs to the DeoC/FbaB aldolase family. ADHS subfamily. Homodecamer.

The enzyme catalyses 1-deoxy-D-threo-hexo-2,5-diulose 6-phosphate + L-aspartate 4-semialdehyde = 2,3-dioxopropyl phosphate + 2-amino-2,3,7-trideoxy-D-lyxo-hept-6-ulosonate. In terms of biological role, catalyzes a transaldol reaction between 6-deoxy-5-ketofructose 1-phosphate (DKFP) and L-aspartate semialdehyde (ASA) with an elimination of hydroxypyruvaldehyde phosphate to yield 2-amino-3,7-dideoxy-D-threo-hept-6-ulosonate (ADH). Plays a key role in an alternative pathway of the biosynthesis of 3-dehydroquinate (DHQ), which is involved in the canonical pathway for the biosynthesis of aromatic amino acids. This Halobacterium salinarum (strain ATCC 700922 / JCM 11081 / NRC-1) (Halobacterium halobium) protein is 2-amino-3,7-dideoxy-D-threo-hept-6-ulosonate synthase.